The sequence spans 259 residues: Aspartate/glutamate leucyltransferase (259 aa).

It belongs to the R-transferase family. Bpt subfamily.

The protein resides in the cytoplasm. The catalysed reaction is N-terminal L-glutamyl-[protein] + L-leucyl-tRNA(Leu) = N-terminal L-leucyl-L-glutamyl-[protein] + tRNA(Leu) + H(+). It carries out the reaction N-terminal L-aspartyl-[protein] + L-leucyl-tRNA(Leu) = N-terminal L-leucyl-L-aspartyl-[protein] + tRNA(Leu) + H(+). Its function is as follows. Functions in the N-end rule pathway of protein degradation where it conjugates Leu from its aminoacyl-tRNA to the N-termini of proteins containing an N-terminal aspartate or glutamate. This is Aspartate/glutamate leucyltransferase from Sinorhizobium medicae (strain WSM419) (Ensifer medicae).